The chain runs to 47 residues: Large ribosomal subunit protein bL34 (47 aa).

It belongs to the bacterial ribosomal protein bL34 family.

This chain is Large ribosomal subunit protein bL34, found in Corynebacterium jeikeium (strain K411).